The sequence spans 114 residues: uncharacterized protein (114 aa).

This is an uncharacterized protein from Acanthamoeba polyphaga mimivirus (APMV).